Consider the following 1323-residue polypeptide: Alpha-factor-transporting ATPase (1323 aa).

Positions 1 to 10 (MFQEKSEKSS) are enriched in basic and acidic residues. The interval 1–23 (MFQEKSEKSSFPKRSSSLRSPSD) is disordered. Residues 12–23 (PKRSSSLRSPSD) are compositionally biased toward low complexity. Asn37 carries an N-linked (GlcNAc...) asparagine glycan. A helical membrane pass occupies residues 42–62 (WPLILVGILLMGGSAIATLMN). The region spanning 45–337 (ILVGILLMGG…ITELLAILNT (293 aa)) is the ABC transmembrane type-1 1 domain. N-linked (GlcNAc...) asparagine glycosylation occurs at Asn83. A helical membrane pass occupies residues 93–113 (LCVGLIGIGCCKMILVWLGMF). A glycan (N-linked (GlcNAc...) asparagine) is linked at Asn136. 4 helical membrane passes run 169–189 (ILAS…MSFY), 192–212 (WSTT…GWYF), 281–301 (VLKT…NYLL), and 315–335 (FSSC…LAIL). Residues 373-609 (IYFKNVWFES…EIVQNYKSQG (237 aa)) form the ABC transporter 1 domain. Residue 408–415 (GKSGSGKS) coordinates ATP. Asn450 is a glycosylation site (N-linked (GlcNAc...) asparagine). A helical membrane pass occupies residues 677-697 (LLGFGILLAIFQGVSSPVFSY). Residues 678 to 969 (LGFGILLAIF…LIHQLPEITR (292 aa)) form the ABC transmembrane type-1 2 domain. The N-linked (GlcNAc...) asparagine glycan is linked to Asn714. The chain crosses the membrane as a helical span at residues 724 to 744 (CISLSIAIFTGVTSYLSEFIL). 2 N-linked (GlcNAc...) asparagine glycosylation sites follow: Asn777 and Asn789. Helical transmembrane passes span 801–821 (FFPL…WSIV), 828–848 (LVGI…GKIL), and 909–929 (IGFA…LFYG). N-linked (GlcNAc...) asparagine glycosylation is present at Asn939. Residues 941–961 (SQLLQVITLLSFTISNASILI) traverse the membrane as a helical segment. 3 N-linked (GlcNAc...) asparagine glycosylation sites follow: Asn991, Asn1030, and Asn1039. The ABC transporter 2 domain occupies 1035–1321 (ISFNNVSFSY…DGEFTKITKT (287 aa)). Residue 1071-1078 (GQSGSGKS) coordinates ATP. Residue Asn1097 is glycosylated (N-linked (GlcNAc...) asparagine). Residues 1120-1140 (GLLCQTIAIVPQFPKFFSGTI) traverse the membrane as a helical segment. Residues Asn1143, Asn1149, and Asn1157 are each glycosylated (N-linked (GlcNAc...) asparagine). A helical transmembrane segment spans residues 1170–1190 (ILKLVNLHQFIVSLPQGLLTI). The N-linked (GlcNAc...) asparagine glycan is linked to Asn1192. Acidic residues predominate over residues 1194–1208 (SDNDNDNGNENENEN). The disordered stretch occupies residues 1194 to 1217 (SDNDNDNGNENENENENGNTISTS).

The protein belongs to the ABC transporter superfamily. Alpha-factor sex pheromone exporter (TC 3.A.1.206) family.

The protein localises to the membrane. The catalysed reaction is an [alpha-factor](in) + ATP + H2O = an [alpha-factor](out) + ADP + phosphate + H(+). This is Alpha-factor-transporting ATPase (HST6) from Candida albicans (strain WO-1) (Yeast).